Here is a 146-residue protein sequence, read N- to C-terminus: Leptin (146 aa).

Cysteines 96 and 146 form a disulfide.

It belongs to the leptin family.

The protein localises to the secreted. Its function is as follows. Key player in the regulation of energy balance and body weight control. Once released into the circulation, has central and peripheral effects by binding LEPR, found in many tissues, which results in the activation of several major signaling pathways. In the hypothalamus, acts as an appetite-regulating factor that induces a decrease in food intake and an increase in energy consumption by inducing anorexinogenic factors and suppressing orexigenic neuropeptides, also regulates bone mass and secretion of hypothalamo-pituitary-adrenal hormones. In the periphery, increases basal metabolism, influences reproductive function, regulates pancreatic beta-cell function and insulin secretion, is pro-angiogenic for endothelial cell and affects innate and adaptive immunity. In the arcuate nucleus of the hypothalamus, activates by depolarization POMC neurons inducing FOS and SOCS3 expression to release anorexigenic peptides and inhibits by hyperpolarization NPY neurons inducing SOCS3 with a consequent reduction on release of orexigenic peptides. In addition to its known satiety inducing effect, has a modulatory role in nutrient absorption. In the intestine, reduces glucose absorption by enterocytes by activating PKC and leading to a sequential activation of p38, PI3K and ERK signaling pathways which exerts an inhibitory effect on glucose absorption. Acts as a growth factor on certain tissues, through the activation of different signaling pathways increases expression of genes involved in cell cycle regulation such as CCND1, via JAK2-STAT3 pathway, or VEGFA, via MAPK1/3 and PI3K-AKT1 pathways. May also play an apoptotic role via JAK2-STAT3 pathway and up-regulation of BIRC5 expression. Pro-angiogenic, has mitogenic activity on vascular endothelial cells and plays a role in matrix remodeling by regulating the expression of matrix metalloproteinases (MMPs) and tissue inhibitors of metalloproteinases (TIMPs). In innate immunity, modulates the activity and function of neutrophils by increasing chemotaxis and the secretion of oxygen radicals. Increases phagocytosis by macrophages and enhances secretion of pro-inflammatory mediators. Increases cytotoxic ability of NK cells. Plays a pro-inflammatory role, in synergy with IL1B, by inducing NOS2 which promotes the production of IL6, IL8 and Prostaglandin E2, through a signaling pathway that involves JAK2, PI3K, MAP2K1/MEK1 and MAPK14/p38. In adaptive immunity, promotes the switch of memory T-cells towards T helper-1 cell immune responses. Increases CD4(+)CD25(-) T-cell proliferation and reduces autophagy during TCR (T-cell receptor) stimulation, through MTOR signaling pathway activation and BCL2 up-regulation. The chain is Leptin (LEP) from Pongo pygmaeus (Bornean orangutan).